We begin with the raw amino-acid sequence, 483 residues long: V-type proton ATPase subunit H (483 aa).

2 positions are modified to phosphoserine: S59 and S483.

Belongs to the V-ATPase H subunit family. In terms of assembly, V-ATPase is a heteromultimeric enzyme made up of two complexes: the ATP-hydrolytic V1 complex and the proton translocation V0 complex. The V1 complex consists of three catalytic AB heterodimers that form a heterohexamer, three peripheral stalks each consisting of EG heterodimers, one central rotor including subunits D and F, and the regulatory subunits C and H. The proton translocation complex V0 consists of the proton transport subunit a, a ring of proteolipid subunits c9c'', rotary subunit d, subunits e and f, and the accessory subunits ATP6AP1/Ac45 and ATP6AP2/PRR. Interacts with AP2M1.

Its subcellular location is the cytoplasmic vesicle. It is found in the clathrin-coated vesicle membrane. Functionally, subunit of the V1 complex of vacuolar(H+)-ATPase (V-ATPase), a multisubunit enzyme composed of a peripheral complex (V1) that hydrolyzes ATP and a membrane integral complex (V0) that translocates protons. V-ATPase is responsible for acidifying and maintaining the pH of intracellular compartments and in some cell types, is targeted to the plasma membrane, where it is responsible for acidifying the extracellular environment. Subunit H is essential for V-ATPase activity, but not for the assembly of the complex. Involved in the endocytosis mediated by clathrin-coated pits, required for the formation of endosomes. This Mus musculus (Mouse) protein is V-type proton ATPase subunit H (Atp6v1h).